We begin with the raw amino-acid sequence, 332 residues long: Putative D-threonate 4-phosphate dehydrogenase (332 aa).

Positions 140 and 141 each coordinate substrate. A divalent metal cation-binding residues include H170, H214, and H270. Residues K278, N287, and R296 each contribute to the substrate site.

It belongs to the PdxA family. PdxA2 subfamily. Homodimer. A divalent metal cation is required as a cofactor.

The catalysed reaction is 4-O-phospho-D-threonate + NAD(+) = dihydroxyacetone phosphate + CO2 + NADH. Functionally, catalyzes the NAD-dependent oxidation and subsequent decarboxylation of D-threonate 4-phosphate to produce dihydroxyacetone phosphate (DHAP). This chain is Putative D-threonate 4-phosphate dehydrogenase, found in Oceanobacillus iheyensis (strain DSM 14371 / CIP 107618 / JCM 11309 / KCTC 3954 / HTE831).